A 124-amino-acid polypeptide reads, in one-letter code: Hemoglobin subunit alpha (124 aa).

The Globin domain maps to P1–R124. Residue H57 participates in O2 binding. H79 is a binding site for heme b.

The protein belongs to the globin family. Hb 1 is a heterotetramer of two alpha and two beta-1 chains. Hb 2 is a heterotetramer of two alpha and two beta-2 chains. Hb 3 is a heterotetramer of two alpha and two beta-3 chains. In terms of tissue distribution, red blood cells (at protein level).

Functionally, involved in oxygen transport from gills to the various peripheral tissues. This is Hemoglobin subunit alpha from Somniosus microcephalus (Greenland sleeper shark).